Reading from the N-terminus, the 134-residue chain is Arginine decarboxylase proenzyme (134 aa).

The active-site Schiff-base intermediate with substrate; via pyruvic acid is the Ser82. Ser82 is modified (pyruvic acid (Ser); by autocatalysis). The active-site Proton acceptor; for processing activity is His87. Cys102 (proton donor; for catalytic activity) is an active-site residue.

It belongs to the prokaryotic AdoMetDC family. Type 1 subfamily. Heterooctamer of four alpha and four beta chains arranged as a tetramer of alpha/beta heterodimers. Requires pyruvate as cofactor. In terms of processing, is synthesized initially as an inactive proenzyme. Formation of the active enzyme involves a self-maturation process in which the active site pyruvoyl group is generated from an internal serine residue via an autocatalytic post-translational modification. Two non-identical subunits are generated from the proenzyme in this reaction, and the pyruvate is formed at the N-terminus of the alpha chain, which is derived from the carboxyl end of the proenzyme. The post-translation cleavage follows an unusual pathway, termed non-hydrolytic serinolysis, in which the side chain hydroxyl group of the serine supplies its oxygen atom to form the C-terminus of the beta chain, while the remainder of the serine residue undergoes an oxidative deamination to produce ammonia and the pyruvoyl group blocking the N-terminus of the alpha chain.

It carries out the reaction L-arginine + H(+) = agmatine + CO2. It functions in the pathway amine and polyamine biosynthesis; agmatine biosynthesis; agmatine from L-arginine: step 1/1. Specifically catalyzes the decarboxylation of L-arginine to agmatine. Has no S-adenosylmethionine decarboxylase (AdoMetDC) activity. This Saccharolobus islandicus (strain M.16.4 / Kamchatka #3) (Sulfolobus islandicus) protein is Arginine decarboxylase proenzyme.